Consider the following 930-residue polypeptide: Protocadherin gamma-B6 (930 aa).

An N-terminal signal peptide occupies residues 1–30 (MGGSCAQRRRAGPRQVLFPLLLPFFYPTLC). 6 Cadherin domains span residues 31-133 (EPIR…APQF), 134-242 (DKKE…PPVF), 243-347 (SRDE…SPEI), 348-452 (IITS…APVF), 453-562 (DQTS…APRV), and 570-675 (DGSA…LPDL). Over 31-691 (EPIRYSIPEE…SDPQAELQFY (661 aa)) the chain is Extracellular. N-linked (GlcNAc...) asparagine glycosylation is found at Asn304, Asn419, and Asn545. A helical membrane pass occupies residues 692–712 (LVVALALISVLFLLAVILAIA). Residues 713-930 (LRLRRSLSPT…KKKSGKKEKK (218 aa)) are Cytoplasmic-facing. Disordered stretches follow at residues 791-839 (PHGG…WPNN) and 900-930 (ATLTNAAGKRDGKAPAGGNGNKKKSGKKEKK). Residues 800–839 (HPETLTSQAPPNTDWRFSQAQRPGTSGSQNGDDTGTWPNN) show a composition bias toward polar residues. A compositionally biased stretch (basic residues) spans 920–930 (NKKKSGKKEKK).

Its subcellular location is the cell membrane. Its function is as follows. Potential calcium-dependent cell-adhesion protein. May be involved in the establishment and maintenance of specific neuronal connections in the brain. The polypeptide is Protocadherin gamma-B6 (PCDHGB6) (Pan troglodytes (Chimpanzee)).